Here is a 149-residue protein sequence, read N- to C-terminus: Transcriptional repressor NrdR (149 aa).

The segment at 3–34 (CPFCDTEETKVIDSRLVSDGYQVRRRRECGHC) is a zinc-finger region. Positions 49–139 (PKIIKTDGTR…VYLSFDDIDQ (91 aa)) constitute an ATP-cone domain.

Belongs to the NrdR family. Zn(2+) is required as a cofactor.

Its function is as follows. Negatively regulates transcription of bacterial ribonucleotide reductase nrd genes and operons by binding to NrdR-boxes. This Haemophilus influenzae (strain 86-028NP) protein is Transcriptional repressor NrdR.